The following is a 188-amino-acid chain: Small ribosomal subunit protein uS7 (188 aa).

It belongs to the universal ribosomal protein uS7 family. In terms of assembly, part of the 30S ribosomal subunit.

Its function is as follows. One of the primary rRNA binding proteins, it binds directly to 16S rRNA where it nucleates assembly of the head domain of the 30S subunit. Is located at the subunit interface close to the decoding center. In Methanococcus maripaludis (strain DSM 14266 / JCM 13030 / NBRC 101832 / S2 / LL), this protein is Small ribosomal subunit protein uS7.